Reading from the N-terminus, the 741-residue chain is Catalase-peroxidase 2 (741 aa).

The signal sequence occupies residues 1–28 (MQKKRVGKSVVAALAIIAMSAGTVAAWA). Residues 107–228 (WHGAGTYRTY…LAATQMGLIY (122 aa)) constitute a cross-link (tryptophyl-tyrosyl-methioninium (Trp-Tyr) (with M-254)). The active-site Proton acceptor is His-108. The segment at residues 228 to 254 (YVNPEGPNGNPDPVAAAKDIRDAFGRM) is a cross-link (tryptophyl-tyrosyl-methioninium (Tyr-Met) (with W-107)). A heme b-binding site is contributed by His-269.

Belongs to the peroxidase family. Peroxidase/catalase subfamily. As to quaternary structure, homodimer or homotetramer. The cofactor is heme b. In terms of processing, formation of the three residue Trp-Tyr-Met cross-link is important for the catalase, but not the peroxidase activity of the enzyme.

It catalyses the reaction H2O2 + AH2 = A + 2 H2O. It carries out the reaction 2 H2O2 = O2 + 2 H2O. Functionally, bifunctional enzyme with both catalase and broad-spectrum peroxidase activity. This Burkholderia ambifaria (strain ATCC BAA-244 / DSM 16087 / CCUG 44356 / LMG 19182 / AMMD) (Burkholderia cepacia (strain AMMD)) protein is Catalase-peroxidase 2.